Reading from the N-terminus, the 671-residue chain is Probable serine/threonine-protein kinase DDB_G0286627 (671 aa).

One can recognise a Protein kinase domain in the interval 31-283 (WVIERQLSKG…SHQLIKHPFF (253 aa)). ATP is bound by residues 37-45 (LSKGSFGQV) and Lys-61. Asp-148 functions as the Proton acceptor in the catalytic mechanism. The helical transmembrane segment at 369–389 (FKIIYLFLILLFLMTILVNLN) threads the bilayer. A disordered region spans residues 410–523 (PESNPIKKPS…PPVTETPKPT (114 aa)). A compositionally biased stretch (low complexity) spans 427-490 (NQYSEGSQSS…PTDSSTTDPP (64 aa)). Pro residues predominate over residues 491-513 (VTDPPITDPPITDPPVTDPPITE).

Belongs to the protein kinase superfamily. STE Ser/Thr protein kinase family. The cofactor is Mg(2+).

The protein localises to the membrane. The catalysed reaction is L-seryl-[protein] + ATP = O-phospho-L-seryl-[protein] + ADP + H(+). It catalyses the reaction L-threonyl-[protein] + ATP = O-phospho-L-threonyl-[protein] + ADP + H(+). In Dictyostelium discoideum (Social amoeba), this protein is Probable serine/threonine-protein kinase DDB_G0286627.